We begin with the raw amino-acid sequence, 142 residues long: 3-hydroxyacyl-[acyl-carrier-protein] dehydratase FabZ (142 aa).

The active site involves histidine 49.

Belongs to the thioester dehydratase family. FabZ subfamily.

It localises to the cytoplasm. The catalysed reaction is a (3R)-hydroxyacyl-[ACP] = a (2E)-enoyl-[ACP] + H2O. Its function is as follows. Involved in unsaturated fatty acids biosynthesis. Catalyzes the dehydration of short chain beta-hydroxyacyl-ACPs and long chain saturated and unsaturated beta-hydroxyacyl-ACPs. The chain is 3-hydroxyacyl-[acyl-carrier-protein] dehydratase FabZ from Clostridium novyi (strain NT).